Consider the following 196-residue polypeptide: Probable GTP-binding protein EngB (196 aa).

Residues 22 to 194 (DKKEIAFAGR…LKTIGEILGD (173 aa)) enclose the EngB-type G domain. Residues 30 to 37 (GRSNVGKS), 56 to 60 (GKTRS), 74 to 77 (DLPG), 141 to 144 (TKSD), and 173 to 175 (FSS) contribute to the GTP site. Residues serine 37 and threonine 58 each coordinate Mg(2+).

It belongs to the TRAFAC class TrmE-Era-EngA-EngB-Septin-like GTPase superfamily. EngB GTPase family. Mg(2+) is required as a cofactor.

Functionally, necessary for normal cell division and for the maintenance of normal septation. The protein is Probable GTP-binding protein EngB of Petrotoga mobilis (strain DSM 10674 / SJ95).